The sequence spans 131 residues: UPF0102 protein YraN (131 aa).

It belongs to the UPF0102 family.

The chain is UPF0102 protein YraN from Salmonella typhi.